A 133-amino-acid polypeptide reads, in one-letter code: Small ribosomal subunit protein uS8 (133 aa).

Belongs to the universal ribosomal protein uS8 family. In terms of assembly, part of the 30S ribosomal subunit. Contacts proteins S5 and S12.

Its function is as follows. One of the primary rRNA binding proteins, it binds directly to 16S rRNA central domain where it helps coordinate assembly of the platform of the 30S subunit. The polypeptide is Small ribosomal subunit protein uS8 (Prochlorococcus marinus (strain SARG / CCMP1375 / SS120)).